The primary structure comprises 501 residues: uncharacterized protein (501 aa).

The chain crosses the membrane as a helical span at residues 26–46 (ILLLLLGLIVLVNIGINVATM). Disordered regions lie at residues 316 to 384 (RGTE…VRRR) and 409 to 501 (EASH…EKLN). Low complexity predominate over residues 476–490 (RSSSLPPASTSTLRP).

The protein localises to the membrane. This is an uncharacterized protein from Homo sapiens (Human).